A 201-amino-acid chain; its full sequence is MAPQEDPEDHVAPAAQRVRAGTLLLANTDLLEPTFRRSVIYIVEHNDGGTLGVVLNRPSETAVHNVLPQWAKLAAKPKTMFIGGPVKRDAALCLATLRVGADPGGVSGLRHVAGRIVMVDLDADPDLIAPLVEGVRIFAGYSGWTIGQLEGEIERDDWIVLSALPSDVLVPPRADLWGRTLRRQPWPLSLLATHPIDVSRN.

This sequence belongs to the UPF0301 (AlgH) family.

In Mycobacterium marinum (strain ATCC BAA-535 / M), this protein is UPF0301 protein MMAR_0053.